The primary structure comprises 338 residues: D-erythrose-4-phosphate dehydrogenase (338 aa).

12–13 (RI) is an NAD(+) binding site. Substrate-binding positions include 154–156 (SCT), arginine 200, 213–214 (TK), and arginine 236. The Nucleophile role is filled by cysteine 155. Asparagine 318 provides a ligand contact to NAD(+).

It belongs to the glyceraldehyde-3-phosphate dehydrogenase family. Epd subfamily. As to quaternary structure, homotetramer.

The protein resides in the cytoplasm. It catalyses the reaction D-erythrose 4-phosphate + NAD(+) + H2O = 4-phospho-D-erythronate + NADH + 2 H(+). It functions in the pathway cofactor biosynthesis; pyridoxine 5'-phosphate biosynthesis; pyridoxine 5'-phosphate from D-erythrose 4-phosphate: step 1/5. Catalyzes the NAD-dependent conversion of D-erythrose 4-phosphate to 4-phosphoerythronate. This is D-erythrose-4-phosphate dehydrogenase from Yersinia pestis bv. Antiqua (strain Antiqua).